A 157-amino-acid polypeptide reads, in one-letter code: Probable cyclic pyranopterin monophosphate synthase (157 aa).

Substrate is bound by residues 75–77 (MCH) and 111–112 (ME). Aspartate 126 is an active-site residue.

It belongs to the MoaC family. In terms of assembly, homohexamer; trimer of dimers.

The enzyme catalyses (8S)-3',8-cyclo-7,8-dihydroguanosine 5'-triphosphate = cyclic pyranopterin phosphate + diphosphate. It functions in the pathway cofactor biosynthesis; molybdopterin biosynthesis. Functionally, catalyzes the conversion of (8S)-3',8-cyclo-7,8-dihydroguanosine 5'-triphosphate to cyclic pyranopterin monophosphate (cPMP). The polypeptide is Probable cyclic pyranopterin monophosphate synthase (Methanosarcina mazei (strain ATCC BAA-159 / DSM 3647 / Goe1 / Go1 / JCM 11833 / OCM 88) (Methanosarcina frisia)).